Reading from the N-terminus, the 124-residue chain is Probable glycine cleavage system H protein (124 aa).

Residues 25 to 106 form the Lipoyl-binding domain; sequence TATIGITDYA…PYGSWLVKMA (82 aa). The residue at position 66 (K66) is an N6-lipoyllysine.

Belongs to the GcvH family. As to quaternary structure, the glycine cleavage system is composed of four proteins: P, T, L and H. It depends on (R)-lipoate as a cofactor.

The glycine cleavage system catalyzes the degradation of glycine. The H protein shuttles the methylamine group of glycine from the P protein to the T protein. This chain is Probable glycine cleavage system H protein, found in Thermoplasma acidophilum (strain ATCC 25905 / DSM 1728 / JCM 9062 / NBRC 15155 / AMRC-C165).